We begin with the raw amino-acid sequence, 272 residues long: Phosphoribosylformylglycinamidine synthase subunit PurQ (272 aa).

A Glutamine amidotransferase type-1 domain is found at 8–272 (VLVMSGYGIN…FKNAVEYFNK (265 aa)). The active-site Nucleophile is Cys-98. Residues His-225, Glu-227, and Glu-235 contribute to the active site.

In terms of assembly, part of the FGAM synthase complex composed of 1 PurL, 1 PurQ and 2 PurS subunits.

The protein resides in the cytoplasm. The enzyme catalyses N(2)-formyl-N(1)-(5-phospho-beta-D-ribosyl)glycinamide + L-glutamine + ATP + H2O = 2-formamido-N(1)-(5-O-phospho-beta-D-ribosyl)acetamidine + L-glutamate + ADP + phosphate + H(+). It catalyses the reaction L-glutamine + H2O = L-glutamate + NH4(+). Its pathway is purine metabolism; IMP biosynthesis via de novo pathway; 5-amino-1-(5-phospho-D-ribosyl)imidazole from N(2)-formyl-N(1)-(5-phospho-D-ribosyl)glycinamide: step 1/2. Part of the phosphoribosylformylglycinamidine synthase complex involved in the purines biosynthetic pathway. Catalyzes the ATP-dependent conversion of formylglycinamide ribonucleotide (FGAR) and glutamine to yield formylglycinamidine ribonucleotide (FGAM) and glutamate. The FGAM synthase complex is composed of three subunits. PurQ produces an ammonia molecule by converting glutamine to glutamate. PurL transfers the ammonia molecule to FGAR to form FGAM in an ATP-dependent manner. PurS interacts with PurQ and PurL and is thought to assist in the transfer of the ammonia molecule from PurQ to PurL. The polypeptide is Phosphoribosylformylglycinamidine synthase subunit PurQ (Methanococcus maripaludis (strain DSM 14266 / JCM 13030 / NBRC 101832 / S2 / LL)).